Consider the following 177-residue polypeptide: Translation initiation factor IF-3 (177 aa).

It belongs to the IF-3 family. In terms of assembly, monomer.

It localises to the cytoplasm. In terms of biological role, IF-3 binds to the 30S ribosomal subunit and shifts the equilibrium between 70S ribosomes and their 50S and 30S subunits in favor of the free subunits, thus enhancing the availability of 30S subunits on which protein synthesis initiation begins. This is Translation initiation factor IF-3 from Nostoc sp. (strain PCC 7120 / SAG 25.82 / UTEX 2576).